The following is a 530-amino-acid chain: 4-alpha-glucanotransferase (530 aa).

It belongs to the disproportionating enzyme family.

The protein resides in the cytoplasm. The enzyme catalyses Transfers a segment of a (1-&gt;4)-alpha-D-glucan to a new position in an acceptor, which may be glucose or a (1-&gt;4)-alpha-D-glucan.. In Chlamydia caviae (strain ATCC VR-813 / DSM 19441 / 03DC25 / GPIC) (Chlamydophila caviae), this protein is 4-alpha-glucanotransferase (malQ).